The primary structure comprises 471 residues: Proton-coupled amino acid transporter-like protein pathetic (471 aa).

N-linked (GlcNAc...) asparagine glycosylation is present at asparagine 61. A run of 10 helical transmembrane segments spans residues 81-101 (FAFMCSGLIMGIFSTIFTAFI), 153-173 (ILFGLFLTYFGTCSVYTVIVA), 187-207 (AVSLRMLICIMLVPLILIAWV), 216-236 (VSMVANVFMGLGLGITFYYLV), 253-273 (LPQFFSITIFAMEAIGVVMPL), 283-303 (FLGICGVLSQGMSGVTLIYML), 337-357 (LISLAVYCTFGLQFFVCLEII), 375-395 (VLRTVLVTAAVVLAVAVPTIG), 397-417 (FMGLIGAFCFSILGLIFPVVI), and 432-452 (WILWKNAIITLCGIGALVFGT).

This sequence belongs to the amino acid/polyamine transporter 2 family. In terms of tissue distribution, in third instar larvae, expressed at highest levels in the brain and digestive system with particularly high levels in surface glia of the brain (at protein level). In third instar larvae, expressed in all cells of the body wall (at protein level). Within the body wall of third instar larvae, most highly expressed in epithelial cells and sensory neurons. Expressed at a similar level in all da neurons (at protein level). Widely expressed during embryonic and late larval stages. Levels are highly dynamic in embryogenesis with surges of expression in many structures, including muscle primordia, salivary glands, proventriculus, trachea and gonads. Expressed in all or most cells of larval imaginal disks. Expression is also particularly strong in the pouch and hinge regions of the wing disk and in the morphogenetic furrow of the eye disk.

It is found in the cell membrane. The protein localises to the lysosome membrane. Its subcellular location is the late endosome membrane. The protein resides in the cell projection. It localises to the axon. It is found in the dendrite. The protein localises to the perikaryon. Its subcellular location is the cytoplasm. Its function is as follows. Amino acid transporter which has pH-dependent electrogenic transport activity for alanine and glycine but not for proline. Plays a role in positive regulation of growth by directly or indirectly modulating the effects of the TOR signaling pathway. Required in a cell-autonomous manner for dendrite growth in neurons with large dendrite arbors. This Drosophila melanogaster (Fruit fly) protein is Proton-coupled amino acid transporter-like protein pathetic.